A 228-amino-acid polypeptide reads, in one-letter code: UPF0758 protein SH1266 (228 aa).

The MPN domain maps to 102-224; sequence KITSPSDVSN…YASLVEEGYF (123 aa). Residues His-173, His-175, and Asp-186 each coordinate Zn(2+). The JAMM motif signature appears at 173-186; that stretch reads HNHPSGDVTPSKED.

It belongs to the UPF0758 family.

The sequence is that of UPF0758 protein SH1266 from Staphylococcus haemolyticus (strain JCSC1435).